A 124-amino-acid chain; its full sequence is Fluoride-specific ion channel FluC (124 aa).

4 helical membrane-spanning segments follow: residues 5-25, 35-55, 63-83, and 98-118; these read FLQV…VNIL, LGTL…AALL, LAPF…AFAL, and LGYV…GLTV. Positions 73 and 76 each coordinate Na(+).

It belongs to the fluoride channel Fluc/FEX (TC 1.A.43) family.

It localises to the cell inner membrane. It carries out the reaction fluoride(in) = fluoride(out). Na(+) is not transported, but it plays an essential structural role and its presence is essential for fluoride channel function. Fluoride-specific ion channel. Important for reducing fluoride concentration in the cell, thus reducing its toxicity. The polypeptide is Fluoride-specific ion channel FluC (Paracoccus denitrificans (strain Pd 1222)).